The primary structure comprises 113 residues: Iron-sulfur cluster insertion protein ErpA (113 aa).

The iron-sulfur cluster site is built by cysteine 41, cysteine 105, and cysteine 107.

It belongs to the HesB/IscA family. As to quaternary structure, homodimer. Iron-sulfur cluster serves as cofactor.

Required for insertion of 4Fe-4S clusters for at least IspG. This Vibrio vulnificus (strain CMCP6) protein is Iron-sulfur cluster insertion protein ErpA.